The sequence spans 85 residues: uncharacterized protein (85 aa).

Residues 35–85 (SDKDAPFSTQALTRSKSKRKRSALPVANGLKKPTRSIKRPSRGERLSATTI) are disordered.

This is an uncharacterized protein from Pasteurella multocida (strain Pm70).